The following is a 217-amino-acid chain: Adenylate kinase (217 aa).

10 to 15 lines the ATP pocket; it reads GAGKGT. Residues 30–59 are NMP; the sequence is STGDIFRKNVADDTPLGRLAKQYMDAGDLV. Residues Thr-31, Arg-36, 57-59, 85-88, and Gln-92 each bind AMP; these read DLV and GFPR. Residues 126-163 form an LID region; the sequence is GRRTCADCAHVWHVTYDPPTVDGVCDLCGGKLFQREDD. Arg-127 is an ATP binding site. Zn(2+) contacts are provided by Cys-130, Cys-133, Cys-150, and Cys-153. Arg-160 and Arg-171 together coordinate AMP. Gly-199 provides a ligand contact to ATP.

Belongs to the adenylate kinase family. As to quaternary structure, monomer.

Its subcellular location is the cytoplasm. The catalysed reaction is AMP + ATP = 2 ADP. It functions in the pathway purine metabolism; AMP biosynthesis via salvage pathway; AMP from ADP: step 1/1. In terms of biological role, catalyzes the reversible transfer of the terminal phosphate group between ATP and AMP. Plays an important role in cellular energy homeostasis and in adenine nucleotide metabolism. This is Adenylate kinase from Acidothermus cellulolyticus (strain ATCC 43068 / DSM 8971 / 11B).